The chain runs to 288 residues: CUF1-dependent copper transporter 1 (288 aa).

Residue asparagine 18 is glycosylated (N-linked (GlcNAc...) asparagine). A helical transmembrane segment spans residues 42–62 (MPSSAGATVGVCIGLFILAIF). 2 disordered regions span residues 106 to 125 (PVLF…YNPL) and 154 to 180 (RESQ…GSGV). Polar residues predominate over residues 158–167 (EGSSAPSYAH). Over residues 168–177 (SQQGQAQAQG) the composition is skewed to low complexity. The helical transmembrane segment at 251–271 (LLMLVVMTFNIWWMISVVIGC) threads the bilayer.

This sequence belongs to the copper transporter (Ctr) (TC 1.A.56) family. SLC31A subfamily. In terms of assembly, interacts with the copper acquisition factor BIM1.

It is found in the cell membrane. Its function is as follows. High affinity copper transporter involved in Cu(+) import into the cell upon copper-limitating conditions. Functions with BIM1 and probably also FRE4 and FRE7, where FRE4 and FRE7 metalloreductases liberate the Cu(2+) bound to the BIM1 copper-binding site for subsequent import of Cu(+) into the cell by CTR1, via the reduction of BIM1-bound Cu(2+) to Cu(+) to reduce binding affinity for BIM1 but increase affinity for CTR1. The BIM1-CTR1 pathway for copper uptake plays a key role in colonization in the brain where copper amounts are low and thus in cryptococcal meningitis. The sequence is that of CUF1-dependent copper transporter 1 from Cryptococcus neoformans var. grubii serotype A (strain H99 / ATCC 208821 / CBS 10515 / FGSC 9487) (Filobasidiella neoformans var. grubii).